Consider the following 202-residue polypeptide: Nucleoside triphosphate pyrophosphatase (202 aa).

The active-site Proton acceptor is the Asp-79.

The protein belongs to the Maf family. It depends on a divalent metal cation as a cofactor.

The protein resides in the cytoplasm. It carries out the reaction a ribonucleoside 5'-triphosphate + H2O = a ribonucleoside 5'-phosphate + diphosphate + H(+). The catalysed reaction is a 2'-deoxyribonucleoside 5'-triphosphate + H2O = a 2'-deoxyribonucleoside 5'-phosphate + diphosphate + H(+). Nucleoside triphosphate pyrophosphatase. May have a dual role in cell division arrest and in preventing the incorporation of modified nucleotides into cellular nucleic acids. In Nitrobacter winogradskyi (strain ATCC 25391 / DSM 10237 / CIP 104748 / NCIMB 11846 / Nb-255), this protein is Nucleoside triphosphate pyrophosphatase.